A 429-amino-acid chain; its full sequence is Ribosomal RNA small subunit methyltransferase B (429 aa).

S-adenosyl-L-methionine is bound by residues 254–260 (CAAPGGK), Asp277, Asp303, and Asp322. Catalysis depends on Cys375, which acts as the Nucleophile.

The protein belongs to the class I-like SAM-binding methyltransferase superfamily. RsmB/NOP family.

The protein resides in the cytoplasm. The catalysed reaction is cytidine(967) in 16S rRNA + S-adenosyl-L-methionine = 5-methylcytidine(967) in 16S rRNA + S-adenosyl-L-homocysteine + H(+). Specifically methylates the cytosine at position 967 (m5C967) of 16S rRNA. The sequence is that of Ribosomal RNA small subunit methyltransferase B from Cronobacter sakazakii (strain ATCC BAA-894) (Enterobacter sakazakii).